A 401-amino-acid polypeptide reads, in one-letter code: NADH-dependent flavin oxidoreductase iliE (401 aa).

Residues 25–28 (ASMS) and Gln107 each bind FMN. Residue 188 to 191 (HAAH) participates in substrate binding. Residue 346–347 (AR) coordinates FMN.

Belongs to the NADH:flavin oxidoreductase/NADH oxidase family.

Its function is as follows. NADH-dependent flavin oxidoreductase; part of the gene cluster that mediates the biosynthesis of ilicicolin H, a 4-hydroxy-2-pyridonealkaloid that has potent and broad antifungal activities by inhibiting the mitochondrial respiration chain. The biosynthesis of ilicicolin H starts with formation of the tetramic acid by the hybrid PKS-NRPS synthetase iliA with the partnering trans-enoyl reductase iliB since iliA lacks a designated enoylreductase (ER) domain. The cytochrome P450 monooxygenase iliC then catalyzes the ring expansion of the tetramate to the acyclic 2-pyridone. The pericyclase iliD further converts the acyclic 2-pyridone into 8-epi-ilicicolin H. 8-epi-ilicicolin H might then spontaneously convert to ilicicolin H since ilicicolin H is produced in the absence of the epimerase iliE, in contrast to what was observed for the Talaromyces variabilis ilicolin H biosynthetic pathway. This is NADH-dependent flavin oxidoreductase iliE from Hypocrea jecorina (strain QM6a) (Trichoderma reesei).